Consider the following 207-residue polypeptide: A-type ATP synthase subunit E (207 aa).

Belongs to the V-ATPase E subunit family. Has multiple subunits with at least A(3), B(3), C, D, E, F, H, I and proteolipid K(x).

The protein localises to the cell membrane. Functionally, component of the A-type ATP synthase that produces ATP from ADP in the presence of a proton gradient across the membrane. The sequence is that of A-type ATP synthase subunit E from Methanosphaera stadtmanae (strain ATCC 43021 / DSM 3091 / JCM 11832 / MCB-3).